The sequence spans 289 residues: Serine/threonine-protein phosphatase Pgam5, mitochondrial (289 aa).

Residues 7–23 (LVCGAGAGLAAFYLSRL) traverse the membrane as a helical segment.

It belongs to the phosphoglycerate mutase family. BPG-dependent PGAM subfamily. As to quaternary structure, interacts with Pk92B/ASK1.

The protein resides in the mitochondrion outer membrane. The enzyme catalyses O-phospho-L-seryl-[protein] + H2O = L-seryl-[protein] + phosphate. It carries out the reaction O-phospho-L-threonyl-[protein] + H2O = L-threonyl-[protein] + phosphate. Its function is as follows. Displays phosphatase activity for serine/threonine residues, and dephosphorylates and activates Pk92B kinase. Has apparently no phosphoglycerate mutase activity. This chain is Serine/threonine-protein phosphatase Pgam5, mitochondrial, found in Drosophila ananassae (Fruit fly).